The primary structure comprises 188 residues: Elongation factor P (188 aa).

It belongs to the elongation factor P family.

Its subcellular location is the cytoplasm. The protein operates within protein biosynthesis; polypeptide chain elongation. In terms of biological role, involved in peptide bond synthesis. Stimulates efficient translation and peptide-bond synthesis on native or reconstituted 70S ribosomes in vitro. Probably functions indirectly by altering the affinity of the ribosome for aminoacyl-tRNA, thus increasing their reactivity as acceptors for peptidyl transferase. This Rhodospirillum centenum (strain ATCC 51521 / SW) protein is Elongation factor P.